The chain runs to 86 residues: MSCSLRSGLVIVFCFILLLLSSNVGCASAARRLRSHKHHHHKVASLDVFNGGERRRALGGVETGEEVVVMDYPQPHRKPPIHNEKS.

The signal sequence occupies residues 1 to 29 (MSCSLRSGLVIVFCFILLLLSSNVGCASA). The propeptide occupies 30–70 (ARRLRSHKHHHHKVASLDVFNGGERRRALGGVETGEEVVVM). A Sulfotyrosine modification is found at Tyr-72. At Pro-80 the chain carries Hydroxyproline. Positions 84–86 (EKS) are excised as a propeptide.

It belongs to the RGF family. As to quaternary structure, binds to LRR receptor-like serine/threonine-protein kinases to trigger their dimerization with SERK proteins and subsequent signaling. As to expression, expressed in stems, hypocotyls, cotyledons, leaves, flowers, shoot apex, siliques, stamens and petals.

The protein localises to the endoplasmic reticulum. Its subcellular location is the secreted. Signaling peptide (root growth factor) that regulates the pattern of root growth and lateral root development by modulating the length and the number of cortical cells in the root apical meristem (RAM), and the anticlinal asymmetric cell divisions in lateral root initiation cells. Also involved in the regulation of hypocotyl bending and root gravitropism in a PIN2-traffic dependent manner, thus influencing the formation of auxin gradients. Maintains the postembryonic root stem cell niche. This is Protein GOLVEN 1 from Arabidopsis thaliana (Mouse-ear cress).